Reading from the N-terminus, the 324-residue chain is Malate dehydrogenase (324 aa).

Residues 21–26 and Asp45 contribute to the NAD(+) site; that span reads GAGRVG. Positions 94 and 100 each coordinate substrate. Residues Asn107 and 130 to 132 each bind NAD(+); that span reads VTN. 2 residues coordinate substrate: Asn132 and Arg163. His187 serves as the catalytic Proton acceptor.

The protein belongs to the LDH/MDH superfamily. MDH type 3 family.

It carries out the reaction (S)-malate + NAD(+) = oxaloacetate + NADH + H(+). Functionally, catalyzes the reversible oxidation of malate to oxaloacetate. The chain is Malate dehydrogenase from Trichormus variabilis (strain ATCC 29413 / PCC 7937) (Anabaena variabilis).